We begin with the raw amino-acid sequence, 464 residues long: Asparagine--tRNA ligase (464 aa).

This sequence belongs to the class-II aminoacyl-tRNA synthetase family. As to quaternary structure, homodimer.

It localises to the cytoplasm. It carries out the reaction tRNA(Asn) + L-asparagine + ATP = L-asparaginyl-tRNA(Asn) + AMP + diphosphate + H(+). The sequence is that of Asparagine--tRNA ligase from Xanthomonas campestris pv. campestris (strain 8004).